The primary structure comprises 295 residues: Sulfotransferase 1 family member D1 (295 aa).

48–53 (KSGTTW) lines the 3'-phosphoadenylyl sulfate pocket. Residues phenylalanine 81 and 106–108 (KTH) contribute to the substrate site. Residue histidine 108 is the Proton acceptor of the active site. 3'-phosphoadenylyl sulfate is bound by residues arginine 130 and serine 138. A substrate-binding site is contributed by phenylalanine 142. Residues tyrosine 193, 227–232 (SSFSVM), and 257–259 (RKG) contribute to the 3'-phosphoadenylyl sulfate site.

Belongs to the sulfotransferase 1 family. In terms of tissue distribution, detected in kidney and liver. Detected in kidney collecting duct cells.

Its subcellular location is the cytoplasm. Sulfotransferase with broad substrate specificity that utilizes 3'-phospho-5'-adenylyl sulfate (PAPS) as sulfonate donor to catalyze the sulfate conjugation of catecholamines, such as dopamine, prostaglandins, leukotriene E4, drugs and xenobiotic compounds. Has sulfotransferase activity towards p-nitrophenol, 2-naphthylamine and minoxidil (in vitro). Sulfonation increases the water solubility of most compounds, and therefore their renal excretion, but it can also result in bioactivation to form active metabolites. This chain is Sulfotransferase 1 family member D1 (Sult1d1), found in Mus musculus (Mouse).